Consider the following 173-residue polypeptide: uncharacterized protein (173 aa).

The disordered stretch occupies residues glutamate 1 to aspartate 23.

As to expression, component of the acid-insoluble and acid-soluble organic matrix of calcified layers of the shell (at protein level).

It localises to the secreted. This is an uncharacterized protein from Lottia gigantea (Giant owl limpet).